The primary structure comprises 111 residues: T cell receptor beta variable 30 (111 aa).

Positions 1–18 (MLCSLLALLLGTFFGVRS) are cleaved as a signal peptide. Residues 19 to 111 (QTIHQWPATL…DSGFYLCAWS (93 aa)) enclose the Ig-like domain. Cys-40 and Cys-108 are disulfide-bonded. N-linked (GlcNAc...) asparagine glycosylation occurs at Asn-80.

In terms of assembly, alpha-beta TR is a heterodimer composed of an alpha and beta chain; disulfide-linked. The alpha-beta TR is associated with the transmembrane signaling CD3 coreceptor proteins to form the TR-CD3 (TcR or TCR). The assembly of alpha-beta TR heterodimers with CD3 occurs in the endoplasmic reticulum where a single alpha-beta TR heterodimer associates with one CD3D-CD3E heterodimer, one CD3G-CD3E heterodimer and one CD247 homodimer forming a stable octameric structure. CD3D-CD3E and CD3G-CD3E heterodimers preferentially associate with TR alpha and TR beta chains, respectively. The association of the CD247 homodimer is the last step of TcR assembly in the endoplasmic reticulum and is required for transport to the cell surface.

It localises to the cell membrane. Functionally, v region of the variable domain of T cell receptor (TR) beta chain that participates in the antigen recognition. Alpha-beta T cell receptors are antigen specific receptors which are essential to the immune response and are present on the cell surface of T lymphocytes. Recognize peptide-major histocompatibility (MH) (pMH) complexes that are displayed by antigen presenting cells (APC), a prerequisite for efficient T cell adaptive immunity against pathogens. Binding of alpha-beta TR to pMH complex initiates TR-CD3 clustering on the cell surface and intracellular activation of LCK that phosphorylates the ITAM motifs of CD3G, CD3D, CD3E and CD247 enabling the recruitment of ZAP70. In turn ZAP70 phosphorylates LAT, which recruits numerous signaling molecules to form the LAT signalosome. The LAT signalosome propagates signal branching to three major signaling pathways, the calcium, the mitogen-activated protein kinase (MAPK) kinase and the nuclear factor NF-kappa-B (NF-kB) pathways, leading to the mobilization of transcription factors that are critical for gene expression and essential for T cell growth and differentiation. The T cell repertoire is generated in the thymus, by V-(D)-J rearrangement. This repertoire is then shaped by intrathymic selection events to generate a peripheral T cell pool of self-MH restricted, non-autoaggressive T cells. Post-thymic interaction of alpha-beta TR with the pMH complexes shapes TR structural and functional avidity. This is T cell receptor beta variable 30 from Homo sapiens (Human).